The chain runs to 487 residues: Neuronal immunoglobulin domain-containing protein rig-3 (487 aa).

Residues 1–23 (MGRLLAKMLFPLAMCLFVSAVSA) form the signal peptide. Ig-like domains are found at residues 34-139 (PIVI…KTIK) and 247-354 (PEFE…PKVT). Intrachain disulfides connect Cys-61/Cys-124 and Cys-271/Cys-327. A lipid anchor (GPI-anchor amidated aspartate) is attached at Asp-466. A propeptide spans 467 to 487 (SASDSKFPLALATLFFVCLFI) (removed in mature form).

In terms of tissue distribution, expressed in the cholinergic motor neurons AS, VA and DA in the ventral nerve cord and in the mechanosensory ALM neurons in the midbody.

It localises to the cell projection. Its subcellular location is the axon. It is found in the synapse. The protein resides in the cell membrane. Its function is as follows. Cell surface protein which plays a role in the plasticity of cholinergic synapses at neuromuscular junctions and in the polarity of the mechanosensory neuron ALM, possibly by antagonizing Wnt signaling. This is Neuronal immunoglobulin domain-containing protein rig-3 from Caenorhabditis elegans.